A 63-amino-acid polypeptide reads, in one-letter code: Protein D-63 (63 aa).

Homodimer.

In terms of biological role, this protein may be involved in virus assembly. The protein is Protein D-63 of Saccharolobus solfataricus (Sulfolobus solfataricus).